The following is a 131-amino-acid chain: Small ribosomal subunit protein uS8 (131 aa).

The protein belongs to the universal ribosomal protein uS8 family. Part of the 30S ribosomal subunit. Contacts proteins S5 and S12.

One of the primary rRNA binding proteins, it binds directly to 16S rRNA central domain where it helps coordinate assembly of the platform of the 30S subunit. This Solibacter usitatus (strain Ellin6076) protein is Small ribosomal subunit protein uS8.